The chain runs to 468 residues: MPSNQDYIVRDIGLADFGRKEIAIAETEMPGLMAVRAEYAASQPLKGAKIAGSLHMTIQTAVLIETLKALGADIRWVSCNIYSTQDHAAAAIAAAGIPVFAVKGETLTEYWDYTARLFDWHDGGMPNMILDDGGDATMFVHAGLRAERGDTAFLDAPGSEEEEIFFALIKRMLKEKPKGWFAGLAESIKGVSEETTTGVHRLYILAKEGKLLFPAINVNDSVTKSKFDNLYGCRESLVDGIRRGTDVMMAGKVAMVAGFGDVGKGSAASLRNAGCRVMVSEVDPICALQAAMEGYEVTTMEDAAPRADIFVTATGNKDVITIDHMRSMKDRAIVCNIGHFDNEIQVAGLKNLKWSNIKPQVDEIEFPDGHRIILLSEGRLVNLGNAMGHPSFVMSASFTNQTLAQIELWTNQGKYENQVYTLPKTLDEKVAALHLEKIGVKLTTLRPDQAAYIGVQASGPFKPDHYRY.

Substrate contacts are provided by T57, D132, and E194. 195-197 is a binding site for NAD(+); the sequence is TTT. Substrate is bound by residues K224 and D228. Residues N229, 258 to 263, E281, N316, 337 to 339, and N382 each bind NAD(+); these read GFGDVG and IGH.

The protein belongs to the adenosylhomocysteinase family. The cofactor is NAD(+).

The protein localises to the cytoplasm. The catalysed reaction is S-adenosyl-L-homocysteine + H2O = L-homocysteine + adenosine. The protein operates within amino-acid biosynthesis; L-homocysteine biosynthesis; L-homocysteine from S-adenosyl-L-homocysteine: step 1/1. Its function is as follows. May play a key role in the regulation of the intracellular concentration of adenosylhomocysteine. The sequence is that of Adenosylhomocysteinase from Methylobacterium sp. (strain 4-46).